A 148-amino-acid chain; its full sequence is Translation initiation factor 2 subunit beta (148 aa).

The protein belongs to the eIF-2-beta/eIF-5 family. Heterotrimer composed of an alpha, a beta and a gamma chain.

In terms of biological role, eIF-2 functions in the early steps of protein synthesis by forming a ternary complex with GTP and initiator tRNA. This Aeropyrum pernix (strain ATCC 700893 / DSM 11879 / JCM 9820 / NBRC 100138 / K1) protein is Translation initiation factor 2 subunit beta (eif2b).